The chain runs to 428 residues: Putative ankyrin repeat protein FPV234 (428 aa).

8 ANK repeats span residues Lys6–Val35, Tyr39–Ile68, Phe71–Leu100, Tyr103–Ser132, Asn137–Lys169, Thr174–Ile202, Met206–Ala238, and Glu242–Tyr271.

The protein is Putative ankyrin repeat protein FPV234 of Fowlpox virus (strain NVSL) (FPV).